The chain runs to 151 residues: Caveolin-3 (151 aa).

Residues 1-83 (MMTEEHTDLE…RLLSTLLGVP (83 aa)) lie on the Cytoplasmic side of the membrane. Residue Lys38 forms a Glycyl lysine isopeptide (Lys-Gly) (interchain with G-Cter in SUMO3) linkage. Residues 84–104 (LALLWGFLFACISFCHIWAVV) constitute an intramembrane region (helical). Residues 105 to 151 (PCIKSYLIEIQCISHIYSLCIRTFCNPLFAALGQVCSNIKVVLRREG) lie on the Cytoplasmic side of the membrane.

The protein belongs to the caveolin family. As to quaternary structure, homooligomer. Interacts with DYSF. Interacts with DLG1 and KCNA5; forms a ternary complex. Interacts with DAG1 (via its C-terminal); the interaction prevents binding of DAG1 with DMD. Interacts with TRIM72. Interacts with MUSK; may regulate MUSK signaling. Interacts with POPDC1. Interacts with CAVIN1, CAVIN2 and CAVIN4. In terms of processing, sumoylation with SUMO3 by PIAS4 may reduce agonist-induced internalization and desensitization of adrenergic receptor ABRD2. As to expression, expressed predominantly in muscle.

The protein localises to the golgi apparatus membrane. It is found in the cell membrane. The protein resides in the membrane. It localises to the caveola. Its subcellular location is the sarcolemma. Functionally, may act as a scaffolding protein within caveolar membranes. Interacts directly with G-protein alpha subunits and can functionally regulate their activity. May also regulate voltage-gated potassium channels. Plays a role in the sarcolemma repair mechanism of both skeletal muscle and cardiomyocytes that permits rapid resealing of membranes disrupted by mechanical stress. Mediates the recruitment of CAVIN2 and CAVIN3 proteins to the caveolae. This is Caveolin-3 (Cav3) from Rattus norvegicus (Rat).